A 317-amino-acid chain; its full sequence is Tenomodulin (317 aa).

The Cytoplasmic segment spans residues 1–30 (MAKNPPENCEDCHILNAEAFKSKKICKSLK). A helical; Signal-anchor for type II membrane protein membrane pass occupies residues 31-50 (ICGLVFGILALTLIVLFWGS). Residues 51 to 317 (KHFWPEVPKK…WWVARMLGRV (267 aa)) are Extracellular-facing. The BRICHOS domain maps to 93-186 (GNGTDETLEV…ICDNVTMYWI (94 aa)). Asn94 carries an N-linked (GlcNAc...) asparagine glycan. A disulfide bond links Cys120 and Cys178. Asn180 is a glycosylation site (N-linked (GlcNAc...) asparagine). Phosphoserine is present on Ser239.

The protein belongs to the chondromodulin-1 family. In terms of tissue distribution, highly expressed in hypovascular connective tissues such as tendons. Also has strong expression in adipose tissue.

The protein localises to the membrane. Its subcellular location is the nucleus envelope. It is found in the cytoplasm. May be an angiogenesis inhibitor. This Homo sapiens (Human) protein is Tenomodulin (TNMD).